Consider the following 402-residue polypeptide: NADH-quinone oxidoreductase subunit D (402 aa).

Belongs to the complex I 49 kDa subunit family. As to quaternary structure, NDH-1 is composed of 14 different subunits. Subunits NuoB, C, D, E, F, and G constitute the peripheral sector of the complex.

The protein localises to the cell inner membrane. It carries out the reaction a quinone + NADH + 5 H(+)(in) = a quinol + NAD(+) + 4 H(+)(out). NDH-1 shuttles electrons from NADH, via FMN and iron-sulfur (Fe-S) centers, to quinones in the respiratory chain. The immediate electron acceptor for the enzyme in this species is believed to be ubiquinone. Couples the redox reaction to proton translocation (for every two electrons transferred, four hydrogen ions are translocated across the cytoplasmic membrane), and thus conserves the redox energy in a proton gradient. The sequence is that of NADH-quinone oxidoreductase subunit D from Xanthobacter autotrophicus (strain ATCC BAA-1158 / Py2).